Reading from the N-terminus, the 223-residue chain is Lipoprotein-releasing system ATP-binding protein LolD (223 aa).

Residues Ile-2–Ala-223 enclose the ABC transporter domain. Gly-38 to Thr-45 contributes to the ATP binding site.

The protein belongs to the ABC transporter superfamily. Lipoprotein translocase (TC 3.A.1.125) family. The complex is composed of two ATP-binding proteins (LolD) and two transmembrane proteins (LolC and LolE).

It localises to the cell inner membrane. In terms of biological role, part of the ABC transporter complex LolCDE involved in the translocation of mature outer membrane-directed lipoproteins, from the inner membrane to the periplasmic chaperone, LolA. Responsible for the formation of the LolA-lipoprotein complex in an ATP-dependent manner. The chain is Lipoprotein-releasing system ATP-binding protein LolD from Syntrophus aciditrophicus (strain SB).